The primary structure comprises 1117 residues: ATP-dependent RNA helicase mtr4 (1117 aa).

The segment at 19–86 is disordered; it reads KSLKEESKNS…DNQDLIPNND (68 aa). Residues 65–79 show a composition bias toward basic and acidic residues; that stretch reads SATKRAKIENLKDNQ. The region spanning 207–363 is the Helicase ATP-binding domain; the sequence is IACIERQESV…WITKIHRQPC (157 aa). 220–227 is an ATP binding site; the sequence is AHTSAGKT. Residues 311–314 carry the DEIH box motif; that stretch reads DEIH. The tract at residues 414–433 is disordered; it reads GDDPAAMATKGNAKKGKTGK. A Helicase C-terminal domain is found at 441–642; that stretch reads DIYKIVKMIM…LSYNMILNLL (202 aa).

This sequence belongs to the helicase family. SKI2 subfamily. In terms of assembly, component of the TRAMP complex composed of at least cid14, mtr4, and air1.

The protein resides in the nucleus. Component of the TRAMP complex which has a poly(A) RNA polymerase activity and is involved in a post-transcriptional quality control mechanism limiting inappropriate expression of genetic information. Polyadenylation is required for the degradative activity of the exosome on several of its nuclear RNA substrates. Required for heterochromatic gene silencing at centromeric repeats by either exosome- or RNAi-mediated degradation of heterochromatic transcripts. In Schizosaccharomyces pombe (strain 972 / ATCC 24843) (Fission yeast), this protein is ATP-dependent RNA helicase mtr4 (mtr4).